The sequence spans 100 residues: Large ribosomal subunit protein uL23 (100 aa).

The protein belongs to the universal ribosomal protein uL23 family. As to quaternary structure, part of the 50S ribosomal subunit. Contacts protein L29, and trigger factor when it is bound to the ribosome.

Functionally, one of the early assembly proteins it binds 23S rRNA. One of the proteins that surrounds the polypeptide exit tunnel on the outside of the ribosome. Forms the main docking site for trigger factor binding to the ribosome. The protein is Large ribosomal subunit protein uL23 of Shewanella sp. (strain MR-4).